Reading from the N-terminus, the 265-residue chain is Mlc titration factor A (265 aa).

Zn(2+) is bound by residues His-111, His-148, His-152, and Glu-211.

Belongs to the MtfA family. In terms of assembly, monomer in solution. Interacts with Mlc. Zn(2+) is required as a cofactor.

It is found in the cytoplasm. With respect to regulation, association between Mlc and MtfA may induce structural changes that activate the peptidase activity of MtfA while inactivating the DNA-binding ability of Mlc. The aminopeptidase activity is partially inhibited by metal chelators such as EDTA and phenantroline, but not by inhibitors for serine-, aspartyl-, or cysteine-proteases. Its function is as follows. Involved in the modulation of the activity of the glucose-phosphotransferase system (glucose-PTS). Interacts with the transcriptional repressor Mlc, preventing its interaction with DNA and leading to the modulation of expression of genes regulated by Mlc, including ptsG, which encodes the PTS system glucose-specific EIICB component. Functionally, shows zinc-dependent metallopeptidase activity. In vitro, can cleave several artificial substrates. The highest activity is observed for L-alanine fused to 4-nitroanilide (L-alanine-pNA). Shows lower activity towards proline-pNA and valine-pNA. This chain is Mlc titration factor A, found in Klebsiella pneumoniae subsp. pneumoniae (strain ATCC 700721 / MGH 78578).